A 299-amino-acid chain; its full sequence is MSSAAGPDPSEAPEERHFLRALELQPPLADMGRAELSSNATTSLVQRRKQAWGRQSWLEQIWNAGPVCQSTAEAAALERELLEDYRFGRQQLVELCGHASAVAVTKAFPLPALSRKQRTVLVVCGPEQNGAVGLVCARHLRVFEYEPTIFYPTRSLDLLHRDLTTQCEKMDIPFLSYLPTEVQLINEAYGLVVDAVLGPGVEPGEVGGPCTRALATLKLLSIPLVSLDIPSGWDAETGSDSEDGLRPDVLVSLAAPKRCAGRFSGRHHFVAGRFVPDDVRRKFALRLPGYTGTDCVAAL.

Residues 74–287 enclose the YjeF N-terminal domain; that stretch reads AAALERELLE…DVRRKFALRL (214 aa).

Interacts with APOA1. Binds to HDL. Expressed in theca cells in ovary and in Leydig cells in testis (at protein level). Also expressed in brain and mammary gland.

May accelerate cholesterol efflux from endothelial cells to high-density lipoprotein (HDL) and thereby regulates angiogenesis. May orchestrate hematopoietic stem and progenitor cell emergence from the hemogenic endothelium, a type of specialized endothelium manifesting hematopoietic potential. YJEFN3-mediated cholesterol efflux activates endothelial SREBF2, the master transcription factor for cholesterol biosynthesis, which in turn transactivates NOTCH and promotes hematopoietic stem and progenitor cell emergence. May play a role in spermiogenesis and oogenesis. In Homo sapiens (Human), this protein is YjeF N-terminal domain-containing protein 3 (YJEFN3).